Here is a 130-residue protein sequence, read N- to C-terminus: Fluoride-specific ion channel FluC 2 (130 aa).

4 helical membrane passes run 4-24 (GLSTYKSFFLVAFGAVPGAIC), 38-58 (NLWGILLVNSSACLLLGFFLA), 72-92 (LYLLLCVGFLGSFSTFSSLIL), and 103-123 (WMELFLFTFTSIGLGIIFISL). Na(+)-binding residues include glycine 82 and serine 85.

It belongs to the fluoride channel Fluc/FEX (TC 1.A.43) family.

The protein localises to the cell inner membrane. It carries out the reaction fluoride(in) = fluoride(out). With respect to regulation, na(+) is not transported, but it plays an essential structural role and its presence is essential for fluoride channel function. Its function is as follows. Fluoride-specific ion channel. Important for reducing fluoride concentration in the cell, thus reducing its toxicity. In Prochlorococcus marinus (strain SARG / CCMP1375 / SS120), this protein is Fluoride-specific ion channel FluC 2.